A 158-amino-acid chain; its full sequence is Cyclic pyranopterin monophosphate synthase (158 aa).

Residues 74–76 and 112–113 contribute to the substrate site; these read MCH and ME. D127 is an active-site residue.

Belongs to the MoaC family. As to quaternary structure, homohexamer; trimer of dimers.

The enzyme catalyses (8S)-3',8-cyclo-7,8-dihydroguanosine 5'-triphosphate = cyclic pyranopterin phosphate + diphosphate. Its pathway is cofactor biosynthesis; molybdopterin biosynthesis. Functionally, catalyzes the conversion of (8S)-3',8-cyclo-7,8-dihydroguanosine 5'-triphosphate to cyclic pyranopterin monophosphate (cPMP). This Helicobacter pylori (strain G27) protein is Cyclic pyranopterin monophosphate synthase.